A 441-amino-acid polypeptide reads, in one-letter code: Protein FAM83A (441 aa).

Disordered stretches follow at residues 81-108 (SNDNQTEGENGSAANGNKSESYYPMNSD) and 312-368 (GMSI…SPLQ). Over residues 314-327 (SIMSDSNPESINTT) the composition is skewed to polar residues. Low complexity predominate over residues 328–354 (SEPFSSISTASISNDSQRPKSPVSTTP).

The protein belongs to the FAM83 family.

Its subcellular location is the cytoplasm. Its function is as follows. May function in the epidermal growth factor receptor/EGFR signaling pathway. The chain is Protein FAM83A from Xenopus tropicalis (Western clawed frog).